We begin with the raw amino-acid sequence, 94 residues long: DASH complex subunit DAD1 (94 aa).

The residue at position 91 (Ser-91) is a Phosphoserine.

Belongs to the DASH complex DAD1 family. In terms of assembly, component of the DASH complex consisting of ASK1, DAD1, DAD2, DAD3, DAD4, DAM1, DUO1, HSK3, SPC19 and SPC34, with a stoichiometry of one copy of each subunit per complex. Multiple DASH complexes oligomerize to form a ring that encircles spindle microtubules and organizes the rod-like NDC80 complexes of the outer kinetochore. DASH complex oligomerization strengthens microtubule attachments. On cytoplasmic microtubules, DASH complexes appear to form patches instead of rings.

It is found in the nucleus. The protein localises to the cytoplasm. Its subcellular location is the cytoskeleton. It localises to the spindle. The protein resides in the chromosome. It is found in the centromere. The protein localises to the kinetochore. In terms of biological role, component of the DASH complex that connects microtubules with kinetochores and couples microtubule depolymerisation to chromosome movement; it is involved in retrieving kinetochores to the spindle poles before their re-orientation on the spindle in early mitosis and allows microtubule depolymerization to pull chromosomes apart and resist detachment during anaphase. Kinetochores, consisting of a centromere-associated inner segment and a microtubule-contacting outer segment, play a crucial role in chromosome segregation by mediating the physical connection between centromeric DNA and microtubules. Kinetochores also serve as an input point for the spindle assembly checkpoint, which delays anaphase until all chromosomes have bioriented on the mitotic spindle. During spindle-kinetochore attachment, kinetochores first attach to the lateral surface of spindle microtubules, which supports the congression of chromosomes toward the middle of the dividing cell; they then slide along towards the spindle pole, a process independent of the DASH complex but requiring the NDC80 complex. When the end of a disassembling microtubule reaches the laterally attached kinetochore, the DASH complex together with the NDC80 complex and STU2 convert lateral attachment to end-on capture to produce a structure that can track with microtubule shortening and sustain attachment when tension is applied across sister kinetochores upon their biorientation. Microtubule depolymerization proceeds by protofilament splaying and induces the kinetochore-attached DASH complex to slide longitudinally, thereby helping to transduce depolymerization energy into pulling forces to disjoin chromatids. Incorrect microtubule attachments are corrected by releasing microubules from the kinetochore through phosphorylation by IPL1 of kinetochore components. Links the microtubule cytoskeleton to chromosomes during interphase. Also contributes to the poleward transport of kinetochores on microtubules following centromeric DNA replication in S-phase. This Saccharomyces cerevisiae (strain ATCC 204508 / S288c) (Baker's yeast) protein is DASH complex subunit DAD1 (DAD1).